The primary structure comprises 143 residues: Large ribosomal subunit protein uL11 (143 aa).

Belongs to the universal ribosomal protein uL11 family. In terms of assembly, part of the ribosomal stalk of the 50S ribosomal subunit. Interacts with L10 and the large rRNA to form the base of the stalk. L10 forms an elongated spine to which L12 dimers bind in a sequential fashion forming a multimeric L10(L12)X complex. Post-translationally, one or more lysine residues are methylated.

Functionally, forms part of the ribosomal stalk which helps the ribosome interact with GTP-bound translation factors. This Kocuria rhizophila (strain ATCC 9341 / DSM 348 / NBRC 103217 / DC2201) protein is Large ribosomal subunit protein uL11.